The chain runs to 955 residues: Serine-aspartate repeat-containing protein C (955 aa).

Residues 1 to 50 (MNNKKTVTNRKGMIPNRLNKFSIRKYSVGTASILVGTTLIFGLSGHEAKA) form the signal peptide. Positions 51-166 (AEHTNGELNQ…TPKTTTIKPR (116 aa)) are disordered. Residues 51-495 (AEHTNGELNQ…GSSTANGDQK (445 aa)) are ligand binding A region. Positions 56-71 (GELNQSKNETTAPSEN) are enriched in polar residues. Residues 72-83 (KTTEKVDSHQLK) show a composition bias toward basic and acidic residues. Over residues 84–114 (DNTQTATADQPKVTMSDSATFKETSSNMQSP) the composition is skewed to polar residues. Positions 115-132 (QNATASQSTTQTSNVTTN) are enriched in low complexity. Polar residues predominate over residues 133–164 (DKSSTTYSNETDKSNLTQAKDVSATPKTTTIK). CNA-B domains lie at 496 to 606 (KYNL…YKTP) and 607 to 717 (KYSL…EEET). Residues 678–935 (TQTGTNTTED…NNSNNGTLFG (258 aa)) form a disordered region. Composition is skewed to acidic residues over residues 685–695 (TEDDKDADGGE) and 712–894 (YYEE…DSDS). The LPXTG sorting signal motif lies at 918-922 (LPETG). Over residues 920 to 935 (ETGSENNNSNNGTLFG) the composition is skewed to low complexity. Thr921 carries the pentaglycyl murein peptidoglycan amidated threonine modification. Residues 922-955 (GSENNNSNNGTLFGGLFAALGSLLLFGRRKKQNK) constitute a propeptide, removed by sortase.

The protein belongs to the serine-aspartate repeat-containing protein (SDr) family. As to quaternary structure, homodimerizes; via N2-Domain. Interacts with host NRXN1; this interaction mediates bacterial attachment to host cells.

It is found in the secreted. It localises to the cell wall. In terms of biological role, cell surface-associated calcium-binding protein which plays an important role in adhesion and pathogenesis. Mediates interactions with components of the extracellular matrix such as host NRXN1 to promote bacterial adhesion. The protein is Serine-aspartate repeat-containing protein C (sdrC) of Staphylococcus aureus (strain MW2).